A 253-amino-acid polypeptide reads, in one-letter code: Probable transcriptional regulatory protein RPR_05505 (253 aa).

It belongs to the TACO1 family.

The protein resides in the cytoplasm. The chain is Probable transcriptional regulatory protein RPR_05505 from Rickettsia peacockii (strain Rustic).